A 524-amino-acid chain; its full sequence is Cytochrome P450 monooxygenase lnaC (524 aa).

Residues 16–36 (ALAVSCIAVSLFLLSPWIAYA) traverse the membrane as a helical segment. Asparagine 150 is a glycosylation site (N-linked (GlcNAc...) asparagine). Cysteine 471 lines the heme pocket.

Belongs to the cytochrome P450 family. Requires heme as cofactor.

The protein resides in the membrane. It functions in the pathway secondary metabolite biosynthesis. Cytochrome P450 monooxygenase; part of the lna gene cluster that mediates the biosynthesis of diastereomeric piperazines. Lna and lnb clusters encode sets of enzymes that produce overlapping sets of previously undescribed metabolites such as piperazinomycin-like metabolites or morpholine. The lna and lnb biosynthetic pathways appear to be part of a signaling network that controls the formation of sclerotia, a resilient overwintering structure. One primary function of the non-canonical nonribosomal peptide synthetases lnaA and lnbA consists in the reduction of L-tyrosine. The presence in the clusters of tailoring enzymes such as the oxidoreductases lnaB, lnbB, lnaE or lnbE, as well as of the cytochrome P450 monooxygenases lnaC, lnaD, or lnbC, might explain formation of various diastereomeric piperazines. The protein is Cytochrome P450 monooxygenase lnaC of Aspergillus flavus (strain ATCC 200026 / FGSC A1120 / IAM 13836 / NRRL 3357 / JCM 12722 / SRRC 167).